Consider the following 381-residue polypeptide: D-rhamnosyltransferase WbpZ (381 aa).

Substrate is bound by residues glutamate 19, histidine 116, lysine 206, and valine 252.

It belongs to the glycosyltransferase group 1 family. Glycosyltransferase 4 subfamily.

The protein resides in the cytoplasm. It carries out the reaction GDP-alpha-D-rhamnose + N-acetyl-alpha-D-glucosaminyl-di-trans,octa-cis-undecaprenyl diphosphate = alpha-D-rhamnosyl-(1-&gt;3)-N-acetyl-alpha-D-glucosaminyl-1-diphospho-di-trans,octa-cis-undecaprenol + GDP + H(+). It catalyses the reaction GDP-alpha-D-rhamnose + N-acetyl-alpha-D-galactosaminyl-di-trans,octa-cis-undecaprenyl diphosphate = alpha-D-rhamnosyl-(1-&gt;3)-N-acetyl-alpha-D-galactosaminyl-1-diphospho-di-trans,octa-cis-undecaprenol + GDP + H(+). The enzyme catalyses N-acetyl-alpha-D-glucosaminyl-di-trans,octa-cis-undecaprenyl diphosphate + GDP-alpha-D-mannose = alpha-D-mannosyl-(1-&gt;3)-N-acetyl-alpha-D-glucosaminyl-di-trans,octa-cis-undecaprenyl diphosphate + GDP + H(+). The catalysed reaction is N-acetyl-alpha-D-galactosaminyl-di-trans,octa-cis-undecaprenyl diphosphate + GDP-alpha-D-mannose = alpha-D-mannosyl-(1-&gt;3)-N-acetyl-alpha-D-galctosaminyl-1-diphospho-di-trans,octa-cis-undecaprenol + GDP + H(+). It participates in lipopolysaccharide biosynthesis; LPS oligosaccharide biosynthesis. Not activated by dithiothreitol (DTT) using GlcNAc-alpha-PO(3)-PO(3)-phenylundecyl (GlcNAc-PP-PhU) as acceptor substrate. 0.25% Triton X-100 and 0.125% NP-40 increases the activity 2.5-fold and 2-fold, respectively. 0.125% octyl glucoside has little effect on activity. Slightly increased activity with Mg(2+) and Pb(2+), while no effect with Mn(2+), Co(2+), Ni(2+), Cu(2+), Zn(2+), Ca(2+) or EDTA. Not inhibited by N-butyryl-galactosamine-alpha-benzyl or N-butyryl-glucosamine-beta-benzyl. Bis-imidazolium salts having aliphatic spacer groups with 4 or 6 carbons have little effect on activity, but spacer groups of 18-22 aliphatic carbons inhibit activity, with the most potent inhibitor being bis-imidazolium salt having a 20-carbon chain spacer length. Its function is as follows. Non-processive alpha-1,3-D-rhamnosyltransferase. Catalyzes the transfer of one D-rhamnose (D-Rha) residue from donor substrate GDP-D-Rha in alpha-1-3 linkage to both GlcNAc- and GalNAc-diphosphate-lipid acceptor substrates. Is also able to transfer D-mannose (D-Man) to these acceptors at a lower level. Nucleotide sugars GDP-D-Rha, GDP-Fuc, UDP-Gal, UDP-GalNAc, UDP-GlcNAc and CMP-sialic acid cannot act as donor substrates. Only compounds with a diphosphate as the aglycone group can act as acceptor substrates. No activity is detected with compounds containing a diphosphate mimic. Fluorescent undecyl-anthracenyl group-containing compounds, such as GlcNAc-PO(3)-PO(3)-AnthrU and GalNAc-PO(3)-PO(3)-AnthrU, are also good acceptor substrates. Involved in the biosynthesis of the common polysaccharide antigen (CPA), also called A band, which is one of the two major cell surface O-antigens of the P.aeruginosa lipopolysaccharide. Involved in susceptibility to antibiotic colistin. The polypeptide is D-rhamnosyltransferase WbpZ (Pseudomonas aeruginosa (strain ATCC 15692 / DSM 22644 / CIP 104116 / JCM 14847 / LMG 12228 / 1C / PRS 101 / PAO1)).